The sequence spans 528 residues: Peptide chain release factor 3 (528 aa).

One can recognise a tr-type G domain in the interval 11-279 (EKRRTFAIIS…GLVEWAPKPL (269 aa)). GTP contacts are provided by residues 20–27 (SHPDAGKT), 88–92 (DTPGH), and 142–145 (NKCD).

The protein belongs to the TRAFAC class translation factor GTPase superfamily. Classic translation factor GTPase family. PrfC subfamily.

It localises to the cytoplasm. Functionally, increases the formation of ribosomal termination complexes and stimulates activities of RF-1 and RF-2. It binds guanine nucleotides and has strong preference for UGA stop codons. It may interact directly with the ribosome. The stimulation of RF-1 and RF-2 is significantly reduced by GTP and GDP, but not by GMP. The protein is Peptide chain release factor 3 of Psychromonas ingrahamii (strain DSM 17664 / CCUG 51855 / 37).